Reading from the N-terminus, the 306-residue chain is Dermonecrotic toxin LarSicTox-alphaIB1ai (306 aa).

Residue Val-1 is a signal peptide. Positions 2-27 are excised as a propeptide; that stretch reads RATEKFASMYFFCHSPQSAETDVAER. Residue His-38 is part of the active site. Residues Glu-58 and Asp-60 each contribute to the Mg(2+) site. The active-site Nucleophile is the His-74. Disulfide bonds link Cys-78-Cys-84 and Cys-80-Cys-223. Asp-118 is a binding site for Mg(2+). An N-linked (GlcNAc...) asparagine glycan is attached at Asn-283.

This sequence belongs to the arthropod phospholipase D family. Class II subfamily. Mg(2+) is required as a cofactor. Expressed by the venom gland.

Its subcellular location is the secreted. The enzyme catalyses an N-(acyl)-sphingosylphosphocholine = an N-(acyl)-sphingosyl-1,3-cyclic phosphate + choline. It carries out the reaction an N-(acyl)-sphingosylphosphoethanolamine = an N-(acyl)-sphingosyl-1,3-cyclic phosphate + ethanolamine. It catalyses the reaction a 1-acyl-sn-glycero-3-phosphocholine = a 1-acyl-sn-glycero-2,3-cyclic phosphate + choline. The catalysed reaction is a 1-acyl-sn-glycero-3-phosphoethanolamine = a 1-acyl-sn-glycero-2,3-cyclic phosphate + ethanolamine. Functionally, dermonecrotic toxins cleave the phosphodiester linkage between the phosphate and headgroup of certain phospholipids (sphingolipid and lysolipid substrates), forming an alcohol (often choline) and a cyclic phosphate. This toxin acts on sphingomyelin (SM). It may also act on ceramide phosphoethanolamine (CPE), lysophosphatidylcholine (LPC) and lysophosphatidylethanolamine (LPE), but not on lysophosphatidylserine (LPS), and lysophosphatidylglycerol (LPG). It acts by transphosphatidylation, releasing exclusively cyclic phosphate products as second products. Induces dermonecrosis, hemolysis, increased vascular permeability, edema, inflammatory response, and platelet aggregation. This Loxosceles arizonica (Arizona brown spider) protein is Dermonecrotic toxin LarSicTox-alphaIB1ai.